The primary structure comprises 330 residues: L-lactate dehydrogenase (330 aa).

NAD(+) is bound by residues valine 31, aspartate 52, lysine 57, and 96–97; that span reads GA. Residues glutamine 99, arginine 105, and 137-140 each bind substrate; that span reads NPVD. NAD(+) contacts are provided by residues 135–137 and serine 160; that span reads VSN. Residue 165–168 participates in substrate binding; that stretch reads DTAR. Arginine 170 and histidine 185 together coordinate beta-D-fructose 1,6-bisphosphate. The active-site Proton acceptor is the histidine 192. Tyrosine 238 carries the post-translational modification Phosphotyrosine. Position 247 (threonine 247) interacts with substrate.

This sequence belongs to the LDH/MDH superfamily. LDH family. In terms of assembly, homotetramer.

Its subcellular location is the cytoplasm. The enzyme catalyses (S)-lactate + NAD(+) = pyruvate + NADH + H(+). Its pathway is fermentation; pyruvate fermentation to lactate; (S)-lactate from pyruvate: step 1/1. With respect to regulation, allosterically activated by fructose 1,6-bisphosphate (FBP). Functionally, catalyzes the conversion of lactate to pyruvate. This Gloeobacter violaceus (strain ATCC 29082 / PCC 7421) protein is L-lactate dehydrogenase.